The chain runs to 407 residues: Acetate kinase (407 aa).

Asparagine 10 is a binding site for Mg(2+). Lysine 17 serves as a coordination point for ATP. Arginine 91 lines the substrate pocket. Aspartate 150 acts as the Proton donor/acceptor in catalysis. Residues 210-214, 285-287, and 338-342 each bind ATP; these read HLGNG, DCR, and GIGEN. Glutamate 392 is a binding site for Mg(2+).

The protein belongs to the acetokinase family. In terms of assembly, homodimer. Mg(2+) is required as a cofactor. Requires Mn(2+) as cofactor.

It localises to the cytoplasm. The catalysed reaction is acetate + ATP = acetyl phosphate + ADP. Its pathway is metabolic intermediate biosynthesis; acetyl-CoA biosynthesis; acetyl-CoA from acetate: step 1/2. Catalyzes the formation of acetyl phosphate from acetate and ATP. Can also catalyze the reverse reaction. This is Acetate kinase from Mannheimia succiniciproducens (strain KCTC 0769BP / MBEL55E).